Reading from the N-terminus, the 253-residue chain is Probable transcriptional regulatory protein Tlet_1011 (253 aa).

This sequence belongs to the TACO1 family.

It localises to the cytoplasm. The protein is Probable transcriptional regulatory protein Tlet_1011 of Pseudothermotoga lettingae (strain ATCC BAA-301 / DSM 14385 / NBRC 107922 / TMO) (Thermotoga lettingae).